Reading from the N-terminus, the 143-residue chain is Large ribosomal subunit protein uL15 (143 aa).

Residues 1–52 are disordered; sequence MELNTIQPADGAKHYKRRVGRGIGSGLGKTAGRGHKGQKSRSGGFHKVGFEG. Residues 21-31 show a composition bias toward gly residues; it reads RGIGSGLGKTA.

The protein belongs to the universal ribosomal protein uL15 family. In terms of assembly, part of the 50S ribosomal subunit.

Functionally, binds to the 23S rRNA. The polypeptide is Large ribosomal subunit protein uL15 (Herminiimonas arsenicoxydans).